Consider the following 261-residue polypeptide: CD40 ligand (261 aa).

The Cytoplasmic portion of the chain corresponds to 1–22; sequence MIETYNQPVPRSAATGPPVSMK. A helical; Signal-anchor for type II membrane protein membrane pass occupies residues 23-43; that stretch reads IFMYLLTVFLITQMIGSALFA. At 44–261 the chain is on the extracellular side; sequence VYLHRRLDKI…GFTSFGLLKL (218 aa). Positions 122–261 constitute a THD domain; the sequence is IAAHVISEAS…GFTSFGLLKL (140 aa). Cysteine 178 and cysteine 218 are oxidised to a cystine. Asparagine 240 carries an N-linked (GlcNAc...) asparagine glycan.

Belongs to the tumor necrosis factor family. In terms of assembly, homotrimer. Interacts with CD28. CD40 ligand, soluble form: Exists as either a monomer or a homotrimer. Forms a ternary complex between CD40 and integrins for CD40-CD40LG signaling. In terms of processing, the soluble form derives from the membrane form by proteolytic processing.

Its subcellular location is the cell membrane. It localises to the cell surface. The protein resides in the secreted. In terms of biological role, cytokine that acts as a ligand to CD40/TNFRSF5. Costimulates T-cell proliferation and cytokine production. Its cross-linking on T-cells generates a costimulatory signal which enhances the production of IL4 and IL10 in conjunction with the TCR/CD3 ligation and CD28 costimulation. Induces the activation of NF-kappa-B. Induces the activation of kinases MAPK8 and PAK2 in T-cells. Mediates B-cell proliferation in the absence of co-stimulus as well as IgE production in the presence of IL4. Involved in immunoglobulin class switching. Its function is as follows. Acts as a ligand for integrins, specifically ITGA5:ITGB1 and ITGAV:ITGB3; both integrins and the CD40 receptor are required for activation of CD40-CD40LG signaling, which have cell-type dependent effects, such as B-cell activation, NF-kappa-B signaling and anti-apoptotic signaling. The polypeptide is CD40 ligand (CD40LG) (Callithrix jacchus (White-tufted-ear marmoset)).